A 285-amino-acid chain; its full sequence is Phosphatidylserine decarboxylase proenzyme (285 aa).

Catalysis depends on charge relay system; for autoendoproteolytic cleavage activity residues Asp-89, His-146, and Ser-252. Ser-252 (schiff-base intermediate with substrate; via pyruvic acid; for decarboxylase activity) is an active-site residue. A Pyruvic acid (Ser); by autocatalysis modification is found at Ser-252.

It belongs to the phosphatidylserine decarboxylase family. PSD-B subfamily. Prokaryotic type I sub-subfamily. As to quaternary structure, heterodimer of a large membrane-associated beta subunit and a small pyruvoyl-containing alpha subunit. Pyruvate is required as a cofactor. In terms of processing, is synthesized initially as an inactive proenzyme. Formation of the active enzyme involves a self-maturation process in which the active site pyruvoyl group is generated from an internal serine residue via an autocatalytic post-translational modification. Two non-identical subunits are generated from the proenzyme in this reaction, and the pyruvate is formed at the N-terminus of the alpha chain, which is derived from the carboxyl end of the proenzyme. The autoendoproteolytic cleavage occurs by a canonical serine protease mechanism, in which the side chain hydroxyl group of the serine supplies its oxygen atom to form the C-terminus of the beta chain, while the remainder of the serine residue undergoes an oxidative deamination to produce ammonia and the pyruvoyl prosthetic group on the alpha chain. During this reaction, the Ser that is part of the protease active site of the proenzyme becomes the pyruvoyl prosthetic group, which constitutes an essential element of the active site of the mature decarboxylase.

Its subcellular location is the cell membrane. It catalyses the reaction a 1,2-diacyl-sn-glycero-3-phospho-L-serine + H(+) = a 1,2-diacyl-sn-glycero-3-phosphoethanolamine + CO2. It participates in phospholipid metabolism; phosphatidylethanolamine biosynthesis; phosphatidylethanolamine from CDP-diacylglycerol: step 2/2. Catalyzes the formation of phosphatidylethanolamine (PtdEtn) from phosphatidylserine (PtdSer). This chain is Phosphatidylserine decarboxylase proenzyme, found in Vibrio parahaemolyticus serotype O3:K6 (strain RIMD 2210633).